Reading from the N-terminus, the 468-residue chain is 3-isopropylmalate dehydratase large subunit (468 aa).

Residues Cys347, Cys408, and Cys411 each contribute to the [4Fe-4S] cluster site.

It belongs to the aconitase/IPM isomerase family. LeuC type 1 subfamily. In terms of assembly, heterodimer of LeuC and LeuD. It depends on [4Fe-4S] cluster as a cofactor.

The catalysed reaction is (2R,3S)-3-isopropylmalate = (2S)-2-isopropylmalate. It functions in the pathway amino-acid biosynthesis; L-leucine biosynthesis; L-leucine from 3-methyl-2-oxobutanoate: step 2/4. Functionally, catalyzes the isomerization between 2-isopropylmalate and 3-isopropylmalate, via the formation of 2-isopropylmaleate. This chain is 3-isopropylmalate dehydratase large subunit, found in Janthinobacterium sp. (strain Marseille) (Minibacterium massiliensis).